The chain runs to 289 residues: 4-hydroxy-tetrahydrodipicolinate synthase (289 aa).

Thr43 contributes to the pyruvate binding site. Catalysis depends on Tyr131, which acts as the Proton donor/acceptor. Catalysis depends on Lys160, which acts as the Schiff-base intermediate with substrate. Val200 is a binding site for pyruvate.

Belongs to the DapA family. Homotetramer; dimer of dimers.

The protein resides in the cytoplasm. The enzyme catalyses L-aspartate 4-semialdehyde + pyruvate = (2S,4S)-4-hydroxy-2,3,4,5-tetrahydrodipicolinate + H2O + H(+). It participates in amino-acid biosynthesis; L-lysine biosynthesis via DAP pathway; (S)-tetrahydrodipicolinate from L-aspartate: step 3/4. Catalyzes the condensation of (S)-aspartate-beta-semialdehyde [(S)-ASA] and pyruvate to 4-hydroxy-tetrahydrodipicolinate (HTPA). In Methanococcus maripaludis (strain C5 / ATCC BAA-1333), this protein is 4-hydroxy-tetrahydrodipicolinate synthase.